The primary structure comprises 415 residues: Gamma-glutamyl phosphate reductase (415 aa).

It belongs to the gamma-glutamyl phosphate reductase family.

It localises to the cytoplasm. It carries out the reaction L-glutamate 5-semialdehyde + phosphate + NADP(+) = L-glutamyl 5-phosphate + NADPH + H(+). Its pathway is amino-acid biosynthesis; L-proline biosynthesis; L-glutamate 5-semialdehyde from L-glutamate: step 2/2. Its function is as follows. Catalyzes the NADPH-dependent reduction of L-glutamate 5-phosphate into L-glutamate 5-semialdehyde and phosphate. The product spontaneously undergoes cyclization to form 1-pyrroline-5-carboxylate. The polypeptide is Gamma-glutamyl phosphate reductase (Thermotoga sp. (strain RQ2)).